A 274-amino-acid chain; its full sequence is Lipid phosphate phosphatase 1 (274 aa).

Residues 1–15 are Lumenal-facing; that stretch reads MISVMADEKHKEYFK. A helical membrane pass occupies residues 16 to 33; the sequence is LYYFQYMIIGLCTILFLY. At 34–69 the chain is on the cytoplasmic side; sequence SEISLVPRGQNIEFSLDDPSISKRYVPNELVGPLEC. A helical membrane pass occupies residues 70 to 87; that stretch reads LILSVGLSNMVVFWTCMF. At 88-117 the chain is on the lumenal side; the sequence is DKDLLKKNRVKRLRERPDGISNDFHFMHTS. A helical membrane pass occupies residues 118–139; it reads ILCLMLIISINAALTGALKLII. The segment at 136–144 is phosphatase sequence motif I; sequence KLIIGNLRP. Residues 140-189 are Cytoplasmic-facing; it reads GNLRPDFVDRCIPDLQKMSDSDSLVFGLDICKQTNKWILYEGLKSTPSGH. The phosphatase sequence motif II stretch occupies residues 186–189; that stretch reads PSGH. The helical transmembrane segment at 190-203 threads the bilayer; the sequence is SSFIVSTMGFTYLW. The Lumenal portion of the chain corresponds to 204–214; that stretch reads QRVFTTRNTRS. A helical membrane pass occupies residues 215–231; the sequence is CIWCPLLALVVMVSRVI. The phosphatase sequence motif III stretch occupies residues 228 to 239; the sequence is SRVIDHRHHWYD. Residues 232–237 are Cytoplasmic-facing; it reads DHRHHW. Residues 238–255 form a helical membrane-spanning segment; that stretch reads YDVVSGAVLAFLVIYCCW. The Lumenal segment spans residues 256-274; that stretch reads KWTFTNLAKRDILPSPVSV.

The protein belongs to the PA-phosphatase related phosphoesterase family.

It localises to the golgi apparatus membrane. The enzyme catalyses a 1,2-diacyl-sn-glycerol 3-diphosphate + H2O = a 1,2-diacyl-sn-glycero-3-phosphate + phosphate + H(+). It catalyses the reaction a 1,2-diacyl-sn-glycero-3-phosphate + H2O = a 1,2-diacyl-sn-glycerol + phosphate. The catalysed reaction is a 1-acyl-sn-glycero-3-phosphate + H2O = a 1-acyl-sn-glycerol + phosphate. PA phosphatase activity is magnesium ion-independent and potently inhibited by N-ethylmaleimide. Also inhibited by phenylglyoxal and propranolol. Functionally, catalyzes the dephosphorylation of diacylglycerol diphosphate (DGPP) to phosphatidate (PA) and the subsequent dephosphorylation of PA to diacylglycerol (DAG). Together with DPP1, regulates intracellular DGPP and PA levels which are phospholipid molecules believed to play a signaling role in stress response. Can also use lysophosphatidic acid (LPA) as a substrate. Substrate preference is PA &gt; DGPP &gt; LPA. The polypeptide is Lipid phosphate phosphatase 1 (LPP1) (Saccharomyces cerevisiae (strain ATCC 204508 / S288c) (Baker's yeast)).